A 348-amino-acid polypeptide reads, in one-letter code: NADH-ubiquinone oxidoreductase chain 2 (348 aa).

9 helical membrane-spanning segments follow: residues 13–33 (VGLGTTLTFASSHWLLAWMGL), 60–80 (FLTQATAAAMILFASTTNAWM), 93–113 (IASTMFMAALALKIGLAPMHF), 149–169 (IDPLLLTLLGISSTLVGGWGG), 178–197 (ILAYSSIAHMGWMIIVIQYA), 202–219 (LIALGTYIIMTSAAFLTL), 246–266 (LVLLSLGGLPPLTGFMPKWLI), 274–294 (DLPIIATAMALTALISLYFYL), and 326–346 (LALFTTAALGLLPMAPAILML).

Belongs to the complex I subunit 2 family.

The protein resides in the mitochondrion inner membrane. It carries out the reaction a ubiquinone + NADH + 5 H(+)(in) = a ubiquinol + NAD(+) + 4 H(+)(out). Its function is as follows. Core subunit of the mitochondrial membrane respiratory chain NADH dehydrogenase (Complex I) that is believed to belong to the minimal assembly required for catalysis. Complex I functions in the transfer of electrons from NADH to the respiratory chain. The immediate electron acceptor for the enzyme is believed to be ubiquinone. In Cyprinus carpio (Common carp), this protein is NADH-ubiquinone oxidoreductase chain 2 (MT-ND2).